Consider the following 740-residue polypeptide: ATP-dependent zinc metalloprotease YME1L (740 aa).

The Mitochondrial matrix segment spans residues 1–256 (MFSTTTHSVP…KSGKTMKYLK (256 aa)). A helical membrane pass occupies residues 257–277 (TLQTIVVIVVFLGIFLSFFTT). The Mitochondrial intermembrane segment spans residues 278–740 (SNGSVFRSIQ…IKAILNESQT (463 aa)). Residue 347-351 (GTGKT) participates in ATP binding. His-563 provides a ligand contact to Zn(2+). Glu-564 is a catalytic residue. Residues His-567 and Asp-641 each contribute to the Zn(2+) site.

The protein in the N-terminal section; belongs to the AAA ATPase family. This sequence in the C-terminal section; belongs to the peptidase M41 family. Zn(2+) serves as cofactor.

Its subcellular location is the mitochondrion inner membrane. Its function is as follows. ATP-dependent metalloprotease that catalyzes the degradation of folded and unfolded proteins with a suitable degron sequence in the mitochondrial intermembrane region. Plays an important role in regulating mitochondrial morphology and function by cleaving Opa1, giving rise to a form of Opa1 that promotes maintenance of normal mitochondrial structure and mitochondrial protein metabolism. Ensures cell proliferation, maintains normal cristae morphology and complex I respiration activity, promotes antiapoptotic activity and protects mitochondria from the accumulation of oxidatively damaged membrane proteins. Required to control the accumulation of nonassembled respiratory chain subunits such as ND-30. This is ATP-dependent zinc metalloprotease YME1L from Drosophila melanogaster (Fruit fly).